A 343-amino-acid chain; its full sequence is GTPase Obg (343 aa).

An Obg domain is found at 1 to 158; sequence MFIDEAKIRV…FTLRLELKVL (158 aa). Residues 121-140 are disordered; that stretch reads RGGRGNQHFATSTHQAPREH. The OBG-type G domain maps to 159–333; that stretch reads ADIGIVGYPN…LKYAMAERVR (175 aa). Residues 165 to 172, 190 to 194, 215 to 218, 286 to 289, and 314 to 316 each bind GTP; these read GYPNVGKS, FTTLE, DIPG, SKID, and SAV. Positions 172 and 192 each coordinate Mg(2+).

Belongs to the TRAFAC class OBG-HflX-like GTPase superfamily. OBG GTPase family. As to quaternary structure, monomer. Mg(2+) serves as cofactor.

It is found in the cytoplasm. An essential GTPase which binds GTP, GDP and possibly (p)ppGpp with moderate affinity, with high nucleotide exchange rates and a fairly low GTP hydrolysis rate. Plays a role in control of the cell cycle, stress response, ribosome biogenesis and in those bacteria that undergo differentiation, in morphogenesis control. The protein is GTPase Obg of Acidobacterium capsulatum (strain ATCC 51196 / DSM 11244 / BCRC 80197 / JCM 7670 / NBRC 15755 / NCIMB 13165 / 161).